The chain runs to 385 residues: Homoserine O-succinyltransferase (385 aa).

In terms of domain architecture, AB hydrolase-1 spans 45–355 (NAVLVCHALN…SHGHDAFLLD (311 aa)). Serine 151 acts as the Nucleophile in catalysis. Arginine 221 is a substrate binding site. Catalysis depends on residues aspartate 316 and histidine 349. Residue aspartate 350 participates in substrate binding.

It belongs to the AB hydrolase superfamily. MetX family. Homodimer.

It is found in the cytoplasm. The enzyme catalyses L-homoserine + succinyl-CoA = O-succinyl-L-homoserine + CoA. Its pathway is amino-acid biosynthesis; L-methionine biosynthesis via de novo pathway; O-succinyl-L-homoserine from L-homoserine: step 1/1. Functionally, transfers a succinyl group from succinyl-CoA to L-homoserine, forming succinyl-L-homoserine. The sequence is that of Homoserine O-succinyltransferase from Herminiimonas arsenicoxydans.